Consider the following 217-residue polypeptide: Ras-related protein RABA1f (217 aa).

20-27 (GDSGVGKS) lines the GTP pocket. The short motif at 42–50 (SKSTIGVEF) is the Effector region element. GTP is bound by residues 68-72 (DTAGQ), 126-129 (NKAD), and 156-157 (SA). S-geranylgeranyl cysteine attachment occurs at residues Cys-214 and Cys-215.

It belongs to the small GTPase superfamily. Rab family.

The protein localises to the cell membrane. Functionally, intracellular vesicle trafficking and protein transport. The polypeptide is Ras-related protein RABA1f (RABA1F) (Arabidopsis thaliana (Mouse-ear cress)).